The following is a 62-amino-acid chain: Large ribosomal subunit protein uL30 (62 aa).

The protein belongs to the universal ribosomal protein uL30 family. As to quaternary structure, part of the 50S ribosomal subunit.

The sequence is that of Large ribosomal subunit protein uL30 from Roseobacter denitrificans (strain ATCC 33942 / OCh 114) (Erythrobacter sp. (strain OCh 114)).